The primary structure comprises 131 residues: Agouti-signaling protein (131 aa).

A signal peptide spans 1 to 20 (MNIFRLLLATLLVSLCFLTA). Residue asparagine 38 is glycosylated (N-linked (GlcNAc...) asparagine). The interval 57 to 104 (KSKKISRKEAEKKRSSKKKASMKNVARPRPPPPNPCVATRNSCKSPAP) is disordered. Cystine bridges form between cysteine 92-cysteine 107, cysteine 99-cysteine 113, cysteine 106-cysteine 124, cysteine 110-cysteine 131, and cysteine 115-cysteine 122. Residues 92–131 (CVATRNSCKSPAPACCDPCASCQCRFFRSACTCRVLSPSC) enclose the Agouti domain.

The protein resides in the secreted. In terms of biological role, involved in the regulation of melanogenesis. The binding of ASP to MC1R precludes alpha-MSH initiated signaling and thus blocks production of cAMP, leading to a down-regulation of eumelanogenesis (brown/black pigment) and thus increasing synthesis of pheomelanin (yellow/red pigment). This Vulpes vulpes (Red fox) protein is Agouti-signaling protein (ASIP).